A 305-amino-acid polypeptide reads, in one-letter code: tRNA dimethylallyltransferase (305 aa).

8 to 15 (GPTAVGKT) provides a ligand contact to ATP. 10–15 (TAVGKT) serves as a coordination point for substrate. Residues 33 to 36 (DSRQ) are interaction with substrate tRNA.

The protein belongs to the IPP transferase family. Monomer. It depends on Mg(2+) as a cofactor.

The enzyme catalyses adenosine(37) in tRNA + dimethylallyl diphosphate = N(6)-dimethylallyladenosine(37) in tRNA + diphosphate. Its function is as follows. Catalyzes the transfer of a dimethylallyl group onto the adenine at position 37 in tRNAs that read codons beginning with uridine, leading to the formation of N6-(dimethylallyl)adenosine (i(6)A). The chain is tRNA dimethylallyltransferase from Thermotoga neapolitana (strain ATCC 49049 / DSM 4359 / NBRC 107923 / NS-E).